The following is a 135-amino-acid chain: MSNITESKGYKEALSVTNNYLAPAIGIGGATDVGLTGVTKQLNTTIYLVAKITQQIEDLQSTIKRLEERVQSLEKAKTPVVTQDPNPEIISKLSDIQISLARQRAVNPAISGVSNYTAPTIKKVDRILRVFKKFN.

This is an uncharacterized protein from Commelina yellow mottle virus (CoYMV).